Reading from the N-terminus, the 304-residue chain is MKFVMYPHLWESTTAVIEGGGHERVEDIKDADFIFFNGSAPEFPDLPENIKFVQASMAGIDALVKRGVVNEKARWANAAGLYADTVAESTIGLILAQMHMHAATRLAKSWSVRPEVENNKSWLHDNKTVAILGAGGIGVRLLEMLKPFNVKTIAVNNSGRPVEGADETFAMDKAEHVWAEADVFVLILPLTDATYQIVNAETLGKMKPSAVLVNVGRGPLINTDDLVDALNNGTIAGAALDVTDPEPLPDSHPLWEMDNVVITPHTANTNERIRALTGELTLRNIELFEAGEQMATEVDVVAGY.

Residues 136 to 137 (GI), 215 to 217 (VGR), and aspartate 241 each bind NAD(+). Arginine 217 is an active-site residue. Residue glutamate 246 is part of the active site. Histidine 265 (proton donor) is an active-site residue. 265–268 (HTAN) is an NAD(+) binding site.

This sequence belongs to the D-isomer specific 2-hydroxyacid dehydrogenase family.

This is an uncharacterized protein from Corynebacterium melassecola.